The following is a 589-amino-acid chain: Heterogeneous nuclear ribonucleoprotein L (589 aa).

A compositionally biased stretch (basic residues) spans 1–16; it reads MSRRLLPRAEKRRRRL. The interval 1-100 is disordered; the sequence is MSRRLLPRAE…NYDDPHKTPA (100 aa). Positions 17 to 27 are enriched in basic and acidic residues; it reads EQRQQPDEQRR. Over residues 38–54 the composition is skewed to gly residues; sequence AGGGGGGGRYYGGGSEG. At S52 the chain carries Phosphoserine. Glycyl lysine isopeptide (Lys-Gly) (interchain with G-Cter in SUMO2) cross-links involve residues K59 and K62. A compositionally biased stretch (gly residues) spans 69–90; it reads QHGGGGGGGGGAGAAGGGGGGE. S101 carries the post-translational modification Phosphoserine. One can recognise an RRM 1 domain in the interval 102-176; the sequence is PVVHIRGLID…HPAFVNYSTS (75 aa). K136 participates in a covalent cross-link: Glycyl lysine isopeptide (Lys-Gly) (interchain with G-Cter in SUMO2). At S185 the chain carries Phosphoserine. One can recognise an RRM 2 domain in the interval 193-270; it reads SVLLFTILNP…CTLKIEYAKP (78 aa). K269 bears the N6-acetyllysine mark. The span at 284-301 shows a compositional bias: polar residues; that stretch reads DYTNPNLSGQGDPGSNPN. The interval 284–378 is disordered; sequence DYTNPNLSGQ…PPPPPEYGPH (95 aa). S291 and S298 each carry phosphoserine. Residue K302 forms a Glycyl lysine isopeptide (Lys-Gly) (interchain with G-Cter in SUMO2) linkage. R354 and R358 each carry asymmetric dimethylarginine. A compositionally biased stretch (pro residues) spans 364 to 375; sequence GHPPPPPPPPEY. Residue S381 is modified to Phosphoserine. 2 consecutive RRM domains span residues 382-478 and 495-583; these read PVLM…KDFS and RIQH…LCFS. At S544 the chain carries Phosphoserine; by CaMK4. K568 participates in a covalent cross-link: Glycyl lysine isopeptide (Lys-Gly) (interchain with G-Cter in SUMO2).

As to quaternary structure, identified in a IGF2BP1-dependent mRNP granule complex containing untranslated mRNAs. Interacts with HNRNPLL. Interacts with APEX1; the interaction is DNA-dependent. Component of a complex with SETD2. Interacts with ELAVL1. Part of a transcription inhibitory ribonucleoprotein complex composed at least of the circular RNA circZNF827, ZNF827 and HNRNPK. Interacts with CHD8 in an RNA-dependent manner. In terms of processing, several isoelectric forms of the L protein are probably the results of post-translational modifications. Post-translationally, phosphorylation at Ser-544 by CaMK4 enhances interaction with a CaMK4-responsive RNA element (CaRRE1), and prevents inclusion of the stress axis-regulated exon (STREX) of the KCNMA1 potassium channel transcripts upon membrane depolarization.

It is found in the nucleus. The protein localises to the nucleoplasm. Its subcellular location is the cytoplasm. In terms of biological role, splicing factor binding to exonic or intronic sites and acting as either an activator or repressor of exon inclusion. Exhibits a binding preference for CA-rich elements. Component of the heterogeneous nuclear ribonucleoprotein (hnRNP) complexes and associated with most nascent transcripts. Associates, together with APEX1, to the negative calcium responsive element (nCaRE) B2 of the APEX2 promoter. As part of a ribonucleoprotein complex composed at least of ZNF827, HNRNPK and the circular RNA circZNF827 that nucleates the complex on chromatin, may negatively regulate the transcription of genes involved in neuronal differentiation. Regulates alternative splicing of a core group of genes involved in neuronal differentiation, likely by mediating H3K36me3-coupled transcription elongation and co-transcriptional RNA processing via interaction with CHD8. The protein is Heterogeneous nuclear ribonucleoprotein L (HNRNPL) of Homo sapiens (Human).